Consider the following 839-residue polypeptide: Autophagy-related protein 9A (839 aa).

The interval 1 to 20 (MAQFDTEYQRLEASYSDSPP) is disordered. Alanine 2 carries the N-acetylalanine modification. Over 2 to 61 (AQFDTEYQRLEASYSDSPPGEEDLLVHVAEGSKSPWHHIENLDLFFSRVYNLHQKNGFTC) the chain is Cytoplasmic. The short motif at 8–11 (YQRL) is the Tyrosine-based sorting signal element. Phosphoserine is present on residues serine 14, serine 16, and serine 18. Residues 62–84 (MLIGEIFELMQFLFVVAFTTFLV) traverse the membrane as a helical segment. The Lumenal segment spans residues 85-128 (SCVDYDILFANKMVNHSLHPTEPVKVTLPDAFLPAQVCSARIQE). N-linked (GlcNAc...) asparagine glycosylation is present at asparagine 99. A helical membrane pass occupies residues 129–154 (NGSLITILVIAGVFWIHRLIKFIYNI). Over 155–290 (CCYWEIHSFY…ELAQRLSNRI (136 aa)) the chain is Cytoplasmic. Residues 291–301 (LWIGIANFLLC) lie within the membrane without spanning it. The Cytoplasmic segment spans residues 302–319 (PLILIWQILYAFFSYAEV). Residues 320–328 (LKREPGALG) lie within the membrane without spanning it. The Cytoplasmic segment spans residues 329–371 (ARCWSLYGRCYLRHFNELEHELQSRLNRGYKPASKYMNCFLSP). The helical transmembrane segment at 372 to 397 (LLTLLAKNGAFFAGSILAVLIALTIY) threads the bilayer. At 398–406 (DEDVLAVEH) the chain is on the lumenal side. Residues 407-424 (VLTTVTLLGVTVTVCRSF) traverse the membrane as a helical segment. Over 425–470 (IPDQHMVFCPEQLLRVILAHIHYMPDHWQGNAHRSQTRDEFAQLFQ) the chain is Cytoplasmic. An intramembrane segment occupies 471–480 (YKAVFILEEL). Residues 481-483 (LSP) lie on the Cytoplasmic side of the membrane. Residues 484–492 (IVTPLILIF) lie within the membrane without spanning it. The Cytoplasmic segment spans residues 493-839 (CLRPRALEII…DELPPQVHKV (347 aa)). A phosphoserine mark is found at serine 656, serine 735, serine 738, serine 741, and serine 828. Disordered regions lie at residues 656 to 686 (SPLQ…SSGS) and 719 to 839 (QQAQ…VHKV). The span at 724 to 736 (EPERHLWHRRESD) shows a compositional bias: basic and acidic residues. Composition is skewed to acidic residues over residues 737 to 747 (ESGESAPDEGG) and 823 to 832 (VPEEGSEDEL).

Belongs to the ATG9 family. In terms of assembly, homotrimer; forms a homotrimer with a central pore that forms a path between the two membrane leaflets. Interacts (via cytoplasmic its C-terminus) with ATG2A. Interacts with SUPT20H. Interacts (via the tyrosine-based sorting signal motif) with AP4M1; promoting association with the AP-4 complex. Interacts with ARFIP1 and ARFIP2. Interacts with PI4K2A and PI4KB. Interacts with ATG4A; the interaction is direct and promotes ATG9A trafficking. Post-translationally, ufmylated in a DDRGK1 dependent manner.

It is found in the preautophagosomal structure membrane. Its subcellular location is the cytoplasmic vesicle. It localises to the autophagosome membrane. The protein localises to the golgi apparatus. The protein resides in the trans-Golgi network membrane. It is found in the late endosome membrane. Its subcellular location is the recycling endosome membrane. It localises to the endoplasmic reticulum membrane. The protein localises to the mitochondrion membrane. It carries out the reaction a 1,2-diacyl-sn-glycero-3-phosphocholine(in) = a 1,2-diacyl-sn-glycero-3-phosphocholine(out). The catalysed reaction is a 1,2-diacyl-sn-glycero-3-phospho-L-serine(in) = a 1,2-diacyl-sn-glycero-3-phospho-L-serine(out). The enzyme catalyses a 1,2-diacyl-sn-glycero-3-phosphoethanolamine(in) = a 1,2-diacyl-sn-glycero-3-phosphoethanolamine(out). Phospholipid scramblase involved in autophagy by mediating autophagosomal membrane expansion. Cycles between the preautophagosomal structure/phagophore assembly site (PAS) and the cytoplasmic vesicle pool and supplies membrane for the growing autophagosome. Lipid scramblase activity plays a key role in preautophagosomal structure/phagophore assembly by distributing the phospholipids that arrive through ATG2 (ATG2A or ATG2B) from the cytoplasmic to the luminal leaflet of the bilayer, thereby driving autophagosomal membrane expansion. Also required to supply phosphatidylinositol 4-phosphate to the autophagosome initiation site by recruiting the phosphatidylinositol 4-kinase beta (PI4KB) in a process dependent on ARFIP2, but not ARFIP1. In addition to autophagy, also plays a role in necrotic cell death. This Pongo abelii (Sumatran orangutan) protein is Autophagy-related protein 9A.